We begin with the raw amino-acid sequence, 245 residues long: Ribonuclease PH (245 aa).

Phosphate is bound by residues arginine 86 and 124-126 (GTR).

This sequence belongs to the RNase PH family. As to quaternary structure, homohexameric ring arranged as a trimer of dimers.

It catalyses the reaction tRNA(n+1) + phosphate = tRNA(n) + a ribonucleoside 5'-diphosphate. In terms of biological role, phosphorolytic 3'-5' exoribonuclease that plays an important role in tRNA 3'-end maturation. Removes nucleotide residues following the 3'-CCA terminus of tRNAs; can also add nucleotides to the ends of RNA molecules by using nucleoside diphosphates as substrates, but this may not be physiologically important. Probably plays a role in initiation of 16S rRNA degradation (leading to ribosome degradation) during starvation. The protein is Ribonuclease PH of Bacillus cytotoxicus (strain DSM 22905 / CIP 110041 / 391-98 / NVH 391-98).